Reading from the N-terminus, the 1691-residue chain is MPETASTANVLPKSDPDAIKTEQDALEGYENGGDALQGTMDGHVETNGDAPATENHHEPNHIHDDERPAKRRRTRDSTPPQNTPKKMKPVSPPWKKISADGPTSYTENGRRKSGRINTLLPEPSPLSKSRTSKRSTGANSNTKTEIHLTNGNSRKMPNGSHKASPATKAPSKQAPASTPKSASKKPTETRTSSRSTRRRSPTPPPPPKNSTRSRRSARFSDAVIKDEAVQDSRTATSNSTNRSPRIKLRVGRSGHIPLVHPGQVRKRPKIGTSFEDFWTRAGDIPVEEGGLQASEDGPQYTDELAERDARVILRVEKEVEDGGMLSQGRCSIFLPEPAEEPPRQWARQDHMVKAMTNFRKLMLAEQQRHRIAAKKVAEACRDEWLRRQPKSEEEIEAEQRAVWISRYRIVAKTLFGTWENVRTEVNRRRLAEWEQEEQRRVKAALNEAVNLSEQKLQARQAGLDSEQLSEEDGFDDLSDDMSMADDDELGLASGEDEDDEDGDADSDIMSSDEEEGDEEDQKDIGDENLTQEQLRAKYAHIPELEKPSTETPVTEPTPKDTDAVDTAQATATENAETSDESVDMDDDMGSTDMDSDEEDEEEESEEESDEDAGGLLGLLFGKSELKKMNSEAVAETPADSKEDSEMPDVEAVSDGEGAEENEMSLIQMPDPEPHESGALEKSTKEAVEEKEQIPAAMQDVAAGQDGLSNTDNNVQEPASQDNDVAMTGNDPEEPSALTFEKPHSPATEPATNPPSRVHSTSPPATSETKPSELDTASTEEMAVDKHDTSRSPSPQPSNHKIEVPFLLRGTLREYQRDGLDWLAGLYANSTNGILADEMGLGKTIQTIALLAHLACTHEVWGPHLVIVPTSVMLNWEMEFKKWCPGFKILAYYGSQEERKRKRQGWNNDDIWNVCITSYQLVLQDQQVFKRRRWHYMILDEAHNIKNFKSQRWQTLLGFNTQARLLLTGTPLQNNLTELWSLLFFLMPAENGVGGFADLQEFHDWFAKPESQILESGREQMDDEARAIISKLHKVLRPYLLRRLKADVEKQMPAKYEHVEFCRLSKRQRELYDGFLSRTDTKETLNSGNYLSIINCLMQLRKVCNHPDLFVDRPIMTSFRMQKSVVSDFEVTEQRVQRLLHDPSPMKDVSLGFLNLMPTQCESLSTTQAERISQLSSHRKLMELREAQKIRAQSAHANLDPSTVASNIGYLESGARWGRYEELQHCVYLNALRRQKKPIYGKNLIELLTIGTDKRPYKPRPKIPRQVLAWFEEESTLVQSMIPTVNQRADSFKTIIEKFSCVTPAVVTRDMEQFVLGRKGIEAFSDEDLKLSAPVRWAPFLPKEAPPDPWHEGRMRLSIQFPDKRLLQYDCGKLQILDKLLRKLQAGGHRALIFTQMTKVLDILEQFLNIHGHKYLRLDGATKVEQRQILTDRFNNDPRILCFILSTRSGGLGINLTGADTVIFYDQDWNPAMDKQCQDRCHRIGQTRDVHIYRLVSEHTIEANILRKASQKQMLDDVVIQEGEFTTDYFNKLSVRDVLSEKLDSKSEGLDAADAALDRVLGGPDTNNDQRRVGRALEQAEDREDVAAARVAEKEIQADDADFTEKPSNNASGTSTARQGTPAGKSVLDGGLDDIDAPHVEEVLEYNAWGDKMHTIDDYMLGIMAEQLKDTKLELPKDKKKGKKKGKDTRKR.

A disordered region spans residues 1 to 244; sequence MPETASTANV…ATSNSTNRSP (244 aa). 2 stretches are compositionally biased toward basic and acidic residues: residues 14–23 and 54–68; these read SDPDAIKTEQ and ENHH…DERP. The segment covering 126 to 155 has biased composition (polar residues); it reads LSKSRTSKRSTGANSNTKTEIHLTNGNSRK. Positions 232-243 are enriched in low complexity; it reads SRTATSNSTNRS. The HSA domain maps to 335–409; it reads PEPAEEPPRQ…RAVWISRYRI (75 aa). Disordered stretches follow at residues 457-615 and 628-801; these read QARQ…AGGL and MNSE…NHKI. Acidic residues predominate over residues 467–521; that stretch reads QLSEEDGFDDLSDDMSMADDDELGLASGEDEDDEDGDADSDIMSSDEEEGDEEDQ. Low complexity predominate over residues 564-575; that stretch reads VDTAQATATENA. Acidic residues-rich tracts occupy residues 576-612 and 645-662; these read ETSD…DEDA and EMPD…EENE. The segment covering 671–692 has biased composition (basic and acidic residues); that stretch reads PEPHESGALEKSTKEAVEEKEQ. Polar residues-rich tracts occupy residues 706-722 and 749-778; these read GLSN…SQDN and PATN…TAST. The Helicase ATP-binding domain occupies 823-988; it reads AGLYANSTNG…WSLLFFLMPA (166 aa). An ATP-binding site is contributed by 836 to 843; the sequence is DEMGLGKT. The DEAH box signature appears at 939-942; it reads DEAH. A Helicase C-terminal domain is found at 1375–1525; it reads ILDKLLRKLQ…DVVIQEGEFT (151 aa). 2 disordered regions span residues 1594 to 1632 and 1669 to 1691; these read EIQA…GGLD and DTKL…TRKR. Residues 1605–1618 are compositionally biased toward polar residues; the sequence is KPSNNASGTSTARQ. The segment covering 1677 to 1691 has biased composition (basic residues); that stretch reads DKKKGKKKGKDTRKR.

This sequence belongs to the SNF2/RAD54 helicase family. SWR1 subfamily. In terms of assembly, component of the SWR1 chromatin-remodeling complex.

It localises to the nucleus. The catalysed reaction is ATP + H2O = ADP + phosphate + H(+). In terms of biological role, catalytic component of the SWR1 complex which mediates the ATP-dependent exchange of histone H2A for the H2A variant HZT1 leading to transcriptional regulation of selected genes by chromatin remodeling. This Gibberella zeae (strain ATCC MYA-4620 / CBS 123657 / FGSC 9075 / NRRL 31084 / PH-1) (Wheat head blight fungus) protein is Helicase SWR1 (SWR1).